The chain runs to 151 residues: UPF0756 membrane protein HS_0993 (151 aa).

4 helical membrane passes run Met-1 to Leu-21, Tyr-52 to Gly-72, Ala-81 to Gly-101, and Ile-123 to Leu-143.

Belongs to the UPF0756 family.

The protein localises to the cell membrane. The sequence is that of UPF0756 membrane protein HS_0993 from Histophilus somni (strain 129Pt) (Haemophilus somnus).